A 224-amino-acid polypeptide reads, in one-letter code: MHIMEGFLPPLWCLIYYIICIPFIVYGIMQIRKVTAESDEAMPMLALSGAFMFILSSLKMPSVTGSCSHPCGNGFGAVFFGPAVVGVLSVIVLVFQAVILAHGGITTLGANVLSMGIIGPLCGYAVWLGLRKLNVNDEIAMFFTAFVADLMTYVVTAIELSLAFPKPDFFTALVTFLGIFAVTQIPLAIAEGILTMVIYRFIKQQKPDILVKLRVISKEEAGVN.

Transmembrane regions (helical) follow at residues 8-28 (LPPL…VYGI), 41-61 (AMPM…LKMP), 75-95 (FGAV…VLVF), 108-128 (LGAN…AVWL), 138-158 (EIAM…VTAI), and 169-189 (FFTA…PLAI).

This sequence belongs to the CbiM family. In terms of assembly, forms an energy-coupling factor (ECF) transporter complex composed of an ATP-binding protein (A component, CbiO), a transmembrane protein (T component, CbiQ) and 2 possible substrate-capture proteins (S components, CbiM and CbiN) of unknown stoichimetry.

It localises to the cell membrane. It participates in cofactor biosynthesis; adenosylcobalamin biosynthesis. Part of the energy-coupling factor (ECF) transporter complex CbiMNOQ involved in cobalt import. The protein is Putative cobalt transport protein CbiM of Methanosphaera stadtmanae (strain ATCC 43021 / DSM 3091 / JCM 11832 / MCB-3).